Consider the following 296-residue polypeptide: 4-hydroxybenzoate octaprenyltransferase (296 aa).

Transmembrane regions (helical) follow at residues 28 to 48 (PIGI…AGKG), 52 to 72 (LNTV…GCVI), 102 to 122 (ALVL…FTNS), 123 to 140 (TTIW…CYPF), 146 to 166 (YYPQ…AFTA), 169 to 189 (GELP…TVGY), 219 to 239 (VIIL…GSRF), 241 to 261 (LGAF…WEFW), and 275 to 295 (FLHN…DYAL).

The protein belongs to the UbiA prenyltransferase family. Mg(2+) is required as a cofactor.

It localises to the cell inner membrane. The enzyme catalyses all-trans-octaprenyl diphosphate + 4-hydroxybenzoate = 4-hydroxy-3-(all-trans-octaprenyl)benzoate + diphosphate. It functions in the pathway cofactor biosynthesis; ubiquinone biosynthesis. Its function is as follows. Catalyzes the prenylation of para-hydroxybenzoate (PHB) with an all-trans polyprenyl group. Mediates the second step in the final reaction sequence of ubiquinone-8 (UQ-8) biosynthesis, which is the condensation of the polyisoprenoid side chain with PHB, generating the first membrane-bound Q intermediate 3-octaprenyl-4-hydroxybenzoate. In Pseudomonas syringae pv. tomato (strain ATCC BAA-871 / DC3000), this protein is 4-hydroxybenzoate octaprenyltransferase.